The chain runs to 310 residues: Malate dehydrogenase (310 aa).

Residues 7 to 12 and Asp32 contribute to the NAD(+) site; that span reads GAGNVG. Residues Arg81 and Arg87 each contribute to the substrate site. Residues Asn94 and 117–119 each bind NAD(+); that span reads VSN. The substrate site is built by Asn119 and Arg150. Catalysis depends on His174, which acts as the Proton acceptor.

Belongs to the LDH/MDH superfamily. MDH type 3 family.

The catalysed reaction is (S)-malate + NAD(+) = oxaloacetate + NADH + H(+). In terms of biological role, catalyzes the reversible oxidation of malate to oxaloacetate. The polypeptide is Malate dehydrogenase (Chlorobium chlorochromatii (strain CaD3)).